We begin with the raw amino-acid sequence, 852 residues long: Phenylalanine--tRNA ligase beta subunit (852 aa).

A tRNA-binding domain is found at 44 to 159 (PETTGPLVIG…DADLASANLK (116 aa)). Residues 428-510 (PEMPMITIHT…RLEGLEDIPS (83 aa)) enclose the B5 domain. 4 residues coordinate Mg(2+): aspartate 488, aspartate 494, glutamate 497, and glutamate 498. In terms of domain architecture, FDX-ACB spans 758–851 (SAFPAVLQDI…ATEKVGAQLR (94 aa)).

This sequence belongs to the phenylalanyl-tRNA synthetase beta subunit family. Type 1 subfamily. In terms of assembly, tetramer of two alpha and two beta subunits. Mg(2+) serves as cofactor.

It is found in the cytoplasm. It carries out the reaction tRNA(Phe) + L-phenylalanine + ATP = L-phenylalanyl-tRNA(Phe) + AMP + diphosphate + H(+). This is Phenylalanine--tRNA ligase beta subunit from Corynebacterium jeikeium (strain K411).